An 84-amino-acid chain; its full sequence is Small ribosomal subunit protein bS20 (84 aa).

Residues 1-25 (MANIVSNEKTYRHTQKVRKENHAKM) form a disordered region.

The protein belongs to the bacterial ribosomal protein bS20 family.

Functionally, binds directly to 16S ribosomal RNA. This Ureaplasma parvum serovar 3 (strain ATCC 700970) protein is Small ribosomal subunit protein bS20.